The following is a 365-amino-acid chain: Chorismate synthase (365 aa).

NADP(+) contacts are provided by R48 and R54. Residues 125–127, 238–239, A278, 293–297, and R319 each bind FMN; these read RSS, NA, and KPTSS.

The protein belongs to the chorismate synthase family. Homotetramer. The cofactor is FMNH2.

It catalyses the reaction 5-O-(1-carboxyvinyl)-3-phosphoshikimate = chorismate + phosphate. It participates in metabolic intermediate biosynthesis; chorismate biosynthesis; chorismate from D-erythrose 4-phosphate and phosphoenolpyruvate: step 7/7. Functionally, catalyzes the anti-1,4-elimination of the C-3 phosphate and the C-6 proR hydrogen from 5-enolpyruvylshikimate-3-phosphate (EPSP) to yield chorismate, which is the branch point compound that serves as the starting substrate for the three terminal pathways of aromatic amino acid biosynthesis. This reaction introduces a second double bond into the aromatic ring system. In Pseudoalteromonas translucida (strain TAC 125), this protein is Chorismate synthase.